Consider the following 187-residue polypeptide: Putative manganese efflux pump MntP (187 aa).

Helical transmembrane passes span 3 to 23, 35 to 55, 56 to 76, 107 to 127, 129 to 149, and 166 to 186; these read FYSLIFLSCALGMDAFAVSLC, HYLIVGIYFGGFQALMPTIGY, FIGITFASFIASIDHWIAFIL, LALAIATSIDALAVGVSFAFL, VNLLLAIFLIGIITFILCIIA, and LLGGLVLIILGVKILIEHLFF.

This sequence belongs to the MntP (TC 9.B.29) family.

It localises to the cell inner membrane. In terms of biological role, probably functions as a manganese efflux pump. This chain is Putative manganese efflux pump MntP, found in Campylobacter jejuni (strain RM1221).